We begin with the raw amino-acid sequence, 351 residues long: Calcium uniporter protein, mitochondrial (351 aa).

A mitochondrion-targeting transit peptide spans 1–50; the sequence is MAAAAGRSLLLLLSSRGGGGGGAGGCGALTAGCFPGLGVSRHRQQQHHRT. Residues 51–233 lie on the Mitochondrial matrix side of the membrane; it reads VHQRIASWQN…ISRKAEKRTT (183 aa). Phosphoserine; by CaMK2 is present on residues serine 57 and serine 92. The N-terminal MCU domain stretch occupies residues 75-165; the sequence is VTVVYQNGLP…LTYHVRPPKR (91 aa). S-glutathionyl cysteine is present on cysteine 97. Positions 192 to 223 form a coiled coil; the sequence is IEQHQLNKERELIERLEDLKEQLAPLEKVRIE. Residues 234–255 form a helical membrane-spanning segment; the sequence is LVLWGGLAYMATQFGILARLTW. The Mitochondrial intermembrane segment spans residues 256–262; it reads WEYSWDI. Residues 260-268 carry the Selectivity filter motif; the sequence is WDIMEPVTY. A helical transmembrane segment spans residues 263–284; sequence MEPVTYFITYGSAMAMYAYFVM. Position 264 (glutamate 264) interacts with Ca(2+). A juxtamembrane helix region spans residues 285–290; it reads TRQEYV. At 285-351 the chain is on the mitochondrial matrix side; the sequence is TRQEYVYPEA…LPLRQIGEKD (67 aa). Residues 311–339 are a coiled coil; sequence RFDLEKYNQLKDAIAQAEMDLKRLRDPLQ. Residue lysine 332 is modified to N6-acetyllysine.

Belongs to the MCU (TC 1.A.77) family. In terms of assembly, homotetramer. Component of the uniplex complex, composed of MCU, EMRE/SMDT1, MICU1 and MICU2 (or MICU3) in a 4:4:1:1 stoichiometry. Interacts with CCDC109B/MCUB; this inhibits channel activity. Interacts with MCUR1. Interactions with MICU1 and MCUR1 are mutually exclusive. Interacts with SLC25A23. In terms of processing, phosphorylation by CaMK2 in heart leads to increased MCU current. The regulation of MCU by CaMK2 is however subject to discussion: another group was unable to reproduce these results. Phosphorylated on tyrosines by PTK2B/PYK2, promoting oligomerization. Glutathionylation at Cys-97 in response to reactive oxygen species (ROS) promotes MCU higher-order assembly, leading to constitutive activation of the MCU channel and mitochondrial calcium overload. Post-translationally, undergoes proteolytic degradation by SPG7.

The protein resides in the mitochondrion inner membrane. The enzyme catalyses Ca(2+)(in) = Ca(2+)(out). Its activity is regulated as follows. MCU channel activity is regulated by the heterodimer composed of MICU1 and either MICU2 or MICU3, which act as calcium-sensors. At low calcium levels, MICU1 occludes the pore of the MCU channel, preventing mitochondrial calcium uptake. At higher calcium levels, calcium-binding to MICU1 and MICU2 (or MICU3) induces a conformational change that weakens MCU-MICU1 interactions and moves the MICU1-MICU2 heterodimer away from the pore, allowing calcium permeation through the channel. MCU channel activity is gated by EMRE/SMDT1 via the juxtamembrane helix loop. Inhibited by ruthenium red or its derivative Ru360. Functionally, channel-forming and calcium-conducting subunit of the mitochondrial inner membrane calcium uniporter complex (uniplex), which mediates calcium uptake into the mitochondrial matrix. MCU channel activity is regulated by the calcium-sensor subunits of the uniplex MICU1 and MICU2 (or MICU3). Mitochondrial calcium homeostasis plays key roles in cellular physiology and regulates ATP production, cytoplasmic calcium signals and activation of cell death pathways. Involved in buffering the amplitude of systolic calcium rises in cardiomyocytes. While dispensable for baseline homeostatic cardiac function, acts as a key regulator of short-term mitochondrial calcium loading underlying a 'fight-or-flight' response during acute stress: acts by mediating a rapid increase of mitochondrial calcium in pacemaker cells. Participates in mitochondrial permeability transition during ischemia-reperfusion injury. Mitochondrial calcium uptake in skeletal muscle cells is involved in muscle size in adults. Regulates synaptic vesicle endocytosis kinetics in central nerve terminal. Regulates glucose-dependent insulin secretion in pancreatic beta-cells by regulating mitochondrial calcium uptake. Involved in antigen processing and presentation. The chain is Calcium uniporter protein, mitochondrial from Homo sapiens (Human).